The sequence spans 448 residues: Solute carrier family 52, riboflavin transporter, member 2 (448 aa).

5 helical membrane passes run 14–34 (LLVA…WVEL), 47–67 (LPSY…VVTL), 79–99 (VPIQ…APLW), 105–125 (VAGQ…ALAC), and 147–167 (FFLG…VQGV). N-linked (GlcNAc...) asparagine glycosylation is present at asparagine 178. A helical membrane pass occupies residues 198–218 (WALTALLVTSAAAFQGLLLLL). The segment at 228 to 267 (GAGPELPLGSPGAEEEEKEEEEALPLQEPPSQAAGTIPGP) is disordered. A compositionally biased stretch (acidic residues) spans 240 to 250 (AEEEEKEEEEA). 5 helical membrane-spanning segments follow: residues 280–300 (AFLL…LPAV), 315–335 (LAVV…MGVL), 342–362 (LVGL…LAIL), 369–389 (VGTT…LCVF), and 407–427 (ALLA…GTMF).

Belongs to the riboflavin transporter family.

It localises to the cell membrane. The enzyme catalyses riboflavin(in) = riboflavin(out). Its activity is regulated as follows. Riboflavin transport is Na(+)-independent but moderately pH-sensitive. Activity is strongly inhibited by riboflavin analogs, such as lumiflavin. Weakly inhibited by flavin adenine dinucleotide (FAD) and flavin mononucleotide (FMN). Its function is as follows. Plasma membrane transporter mediating the uptake by cells of the water soluble vitamin B2/riboflavin that plays a key role in biochemical oxidation-reduction reactions of the carbohydrate, lipid, and amino acid metabolism. May also act as a receptor for 4-hydroxybutyrate. In terms of biological role, (Microbial infection) In case of infection by retroviruses, acts as a cell receptor to retroviral envelopes similar to the porcine endogenous retrovirus (PERV-A). The sequence is that of Solute carrier family 52, riboflavin transporter, member 2 (SLC52A2) from Papio hamadryas (Hamadryas baboon).